A 591-amino-acid chain; its full sequence is Complement component C8 beta chain (591 aa).

The N-terminal stretch at 1–32 is a signal peptide; sequence MKNSRTWAWRAPVELFLLCAALGCLSLPGSRG. A propeptide spanning residues 33 to 54 is cleaved from the precursor; it reads ERPHSFGSNAVNKSFAKSRQMR. The TSP type-1 1 domain occupies 64-117; sequence DCELSSWSSWTTCDPCQKKRYRYAYLLQPSQFHGEPCNFSDKEVEDCVTNRPCG. Intrachain disulfides connect Cys65–Cys100, Cys76–Cys110, Cys79–Cys116, Cys122–Cys133, Cys127–Cys146, Cys140–Cys155, and Cys162–Cys200. 2 C-linked (Man) tryptophan glycosylation sites follow: Trp70 and Trp73. A glycan (N-linked (GlcNAc...) asparagine) is linked at Asn101. Residues 120 to 157 enclose the LDL-receptor class A domain; sequence VRCEGFVCAQTGRCVNRRLLCNGDNDCGDQSDEANCRR. Positions 138, 141, 143, 145, 151, and 152 each coordinate Ca(2+). The 347-residue stretch at 158 to 504 folds into the MACPF domain; the sequence is IYKKCQHEMD…EFQKEVSSCH (347 aa). Asn243 carries N-linked (GlcNAc...) asparagine glycosylation. Transmembrane regions (beta stranded) follow at residues 252–259, 262–269, 379–386, and 392–399; these read SGFSFGFK, GIFELGIS, AKNDFKIG, and VYVSLGVS. A disulfide bond links Cys378 and Cys403. Thr418 carries the post-translational modification Phosphothreonine. 4 disulfide bridges follow: Cys503–Cys550, Cys505–Cys521, Cys508–Cys523, and Cys525–Cys534. The EGF-like domain maps to 505-535; it reads CAPCQGNGVPVLKGSRCDCICPVGSQGLACE. One can recognise a TSP type-1 2 domain in the interval 545 to 591; that stretch reads DGKWNCWSNWSSCSGRRKTRQRQCNNPPPQNGGSPCSGPASETLDCS. Residues Trp551 and Trp554 are each glycosylated (C-linked (Man) tryptophan). A disulfide bridge links Cys557 with Cys590. The segment at 568-591 is disordered; it reads CNNPPPQNGGSPCSGPASETLDCS.

The protein belongs to the complement C6/C7/C8/C9 family. Heterotrimer of 3 chains: alpha (C8A), beta (C8B) and gamma (C8G); the alpha and gamma chains are disulfide bonded. Component of the membrane attack complex (MAC), composed of complement C5b, C6, C7, C8A, C8B, C8G and multiple copies of the pore-forming subunit C9. N-glycosylated; contains one or two bound glycans. Not O-glycosylated.

The protein resides in the secreted. Its subcellular location is the target cell membrane. Membrane attack complex (MAC) assembly is inhibited by CD59, thereby protecting self-cells from damage during complement activation. CD59 acts by binding to the beta-haipins of C8 (C8A and C8B), forming an intermolecular beta-sheet that prevents incorporation of the multiple copies of C9 required for complete formation of the osmolytic pore. MAC assembly is also inhibited by clusterin (CLU) chaperones that inhibit polymerization of C9. Functionally, component of the membrane attack complex (MAC), a multiprotein complex activated by the complement cascade, which inserts into a target cell membrane and forms a pore, leading to target cell membrane rupture and cell lysis. The MAC is initiated by proteolytic cleavage of C5 into complement C5b in response to the classical, alternative, lectin and GZMK complement pathways. The complement pathways consist in a cascade of proteins that leads to phagocytosis and breakdown of pathogens and signaling that strengthens the adaptive immune system. C8B, together with C8A and C8G, inserts into the target membrane, but does not form pores by itself. During MAC assembly, associates with C5b, C6 and C7 to form the C5b8 intermediate complex that inserts into the target membrane and traverses the bilayer increasing membrane rigidity. The sequence is that of Complement component C8 beta chain from Homo sapiens (Human).